A 58-amino-acid chain; its full sequence is Large ribosomal subunit protein uL30 (58 aa).

It belongs to the universal ribosomal protein uL30 family. Part of the 50S ribosomal subunit.

The chain is Large ribosomal subunit protein uL30 from Blochmanniella floridana.